A 480-amino-acid chain; its full sequence is tRNA-2-methylthio-N(6)-dimethylallyladenosine synthase (480 aa).

The 121-residue stretch at 25-145 folds into the MTTase N-terminal domain; that stretch reads GVFYVHTLGC…LPQLLDQARI (121 aa). [4Fe-4S] cluster-binding residues include C34, C74, C108, C182, C186, and C189. The Radical SAM core domain occupies 168-397; the sequence is RASKVSSWVA…VALQERITEE (230 aa). In terms of domain architecture, TRAM spans 400–470; the sequence is KTFEGRDVEV…RHNLIADPNP (71 aa).

The protein belongs to the methylthiotransferase family. MiaB subfamily. Monomer. [4Fe-4S] cluster is required as a cofactor.

It is found in the cytoplasm. The enzyme catalyses N(6)-dimethylallyladenosine(37) in tRNA + (sulfur carrier)-SH + AH2 + 2 S-adenosyl-L-methionine = 2-methylsulfanyl-N(6)-dimethylallyladenosine(37) in tRNA + (sulfur carrier)-H + 5'-deoxyadenosine + L-methionine + A + S-adenosyl-L-homocysteine + 2 H(+). Functionally, catalyzes the methylthiolation of N6-(dimethylallyl)adenosine (i(6)A), leading to the formation of 2-methylthio-N6-(dimethylallyl)adenosine (ms(2)i(6)A) at position 37 in tRNAs that read codons beginning with uridine. The chain is tRNA-2-methylthio-N(6)-dimethylallyladenosine synthase from Bifidobacterium adolescentis (strain ATCC 15703 / DSM 20083 / NCTC 11814 / E194a).